Consider the following 404-residue polypeptide: NADH-quinone oxidoreductase subunit D 1 (404 aa).

It belongs to the complex I 49 kDa subunit family. In terms of assembly, NDH-1 is composed of 14 different subunits. Subunits NuoB, C, D, E, F, and G constitute the peripheral sector of the complex.

Its subcellular location is the cell membrane. It catalyses the reaction a quinone + NADH + 5 H(+)(in) = a quinol + NAD(+) + 4 H(+)(out). In terms of biological role, NDH-1 shuttles electrons from NADH, via FMN and iron-sulfur (Fe-S) centers, to quinones in the respiratory chain. The immediate electron acceptor for the enzyme in this species is believed to be a menaquinone. Couples the redox reaction to proton translocation (for every two electrons transferred, four hydrogen ions are translocated across the cytoplasmic membrane), and thus conserves the redox energy in a proton gradient. This is NADH-quinone oxidoreductase subunit D 1 from Symbiobacterium thermophilum (strain DSM 24528 / JCM 14929 / IAM 14863 / T).